The primary structure comprises 744 residues: NAD(P)H-quinone oxidoreductase subunit 5, chloroplastic (744 aa).

The next 16 membrane-spanning stretches (helical) occupy residues 9–29 (WIIP…LLLF), 40–60 (WAFQ…NLSI), 89–109 (IDPL…MVLI), 125–145 (FAYM…SNLI), 147–167 (IYIF…FWFT), 185–205 (GDFG…SFEF), 219–239 (NEVN…GAIA), 258–278 (TPIS…FLVA), 290–312 (IMNF…ALAQ), 327–347 (LGYM…FHLI), 354–374 (ALLF…VGYC), 396–416 (TSFL…CFWS), 425–445 (WLYS…TAFY), 549–569 (LFPI…GIPF), 608–628 (VFSV…YKPV), and 724–744 (YLFF…FLNF).

It belongs to the complex I subunit 5 family. In terms of assembly, NDH is composed of at least 16 different subunits, 5 of which are encoded in the nucleus.

Its subcellular location is the plastid. It is found in the chloroplast thylakoid membrane. It catalyses the reaction a plastoquinone + NADH + (n+1) H(+)(in) = a plastoquinol + NAD(+) + n H(+)(out). It carries out the reaction a plastoquinone + NADPH + (n+1) H(+)(in) = a plastoquinol + NADP(+) + n H(+)(out). NDH shuttles electrons from NAD(P)H:plastoquinone, via FMN and iron-sulfur (Fe-S) centers, to quinones in the photosynthetic chain and possibly in a chloroplast respiratory chain. The immediate electron acceptor for the enzyme in this species is believed to be plastoquinone. Couples the redox reaction to proton translocation, and thus conserves the redox energy in a proton gradient. The sequence is that of NAD(P)H-quinone oxidoreductase subunit 5, chloroplastic (ndhF) from Adenocaulon himalaicum (Trailplant).